Here is a 1130-residue protein sequence, read N- to C-terminus: Roquin-1 (1130 aa).

Zn(2+) is bound by residues Cys-14, Cys-17, Cys-33, His-35, Cys-38, Cys-50, and Asp-53. Residues 14–54 form an RING-type; degenerate zinc finger; the sequence is CPICTQTFDETIRKPISLGCGHTVCKMCLNKLHRKACPFDQ. An HEPN-N region spans residues 128 to 176; it reads VLSRPMQRKLVTLVHCQLVEEEGRIRAMRAARSLGERTVTELILQHQNP. The tract at residues 177–326 is ROQ; that stretch reads QQLSSNLWAA…MQSIIDKLQT (150 aa). The HEPN-C stretch occupies residues 327 to 399; sequence PASFAQSVQE…GLVDYIQNHS (73 aa). The C3H1-type zinc finger occupies 413-441; sequence KYKTYMCRDMKQRGGCPRGASCTFAHSQE. Ser-462 carries the post-translational modification Phosphoserine. Disordered stretches follow at residues 493-567 and 722-750; these read LPNG…DLPP and PHPAQIRPSYPRDPPYSRLPPPQPHPSLD. Positions 497–506 are enriched in polar residues; sequence IASSGSTVTQ. Ser-531 and Ser-535 each carry phosphoserine. Composition is skewed to pro residues over residues 553 to 567 and 732 to 746; these read NPHPVPPRGPTDLPP and PRDPPYSRLPPPQPH. Ser-861, Ser-1107, and Ser-1110 each carry phosphoserine. A disordered region spans residues 1100 to 1130; that stretch reads KTSSLNLSEDSEGGGDNNDSQRSGVVSNSAP. Positions 1116-1130 are enriched in polar residues; sequence NNDSQRSGVVSNSAP.

In terms of assembly, interacts with DDX6 and EDC4. Interacts with CCR4-NOT deadenylase complex. Interacts with RC3H1; the interaction is RNA independent. Post-translationally, proteolytically cleaved after Arg-510 and Arg-579 by MALT1 in activated CD4(+) T cells; cleavage at Arg-510 and Arg-579 is critical for promoting RC3H1 degradation in response to T-cell receptor (TCR) stimulation, and hence is necessary for prolonging the stability of a set of mRNAs controlling Th17 cell differentiation. In terms of tissue distribution, widely expressed, with highest levels in lymph node and thymus and slightly lesser amounts in brain, lung, and spleen (at protein level). Very weak expression in heart, muscle, and kidney (at protein level). Expressed in CD4(+) helper T-cells (at protein level).

Its subcellular location is the cytoplasm. The protein resides in the P-body. It is found in the cytoplasmic granule. The catalysed reaction is S-ubiquitinyl-[E2 ubiquitin-conjugating enzyme]-L-cysteine + [acceptor protein]-L-lysine = [E2 ubiquitin-conjugating enzyme]-L-cysteine + N(6)-ubiquitinyl-[acceptor protein]-L-lysine.. The protein operates within protein modification; protein ubiquitination. In terms of biological role, post-transcriptional repressor of mRNAs containing a conserved stem loop motif, called constitutive decay element (CDE), which is often located in the 3'-UTR, as in HMGXB3, ICOS, IER3, NFKBID, NFKBIZ, PPP1R10, TNF, TNFRSF4 and in many more mRNAs. Cleaves translationally inactive mRNAs harboring a stem-loop (SL), often located in their 3'-UTRs, during the early phase of inflammation in a helicase UPF1-independent manner. Binds to CDE and promotes mRNA deadenylation and degradation. This process does not involve miRNAs. In follicular helper T (Tfh) cells, represses of ICOS and TNFRSF4/Ox40 expression, thus preventing spontaneous Tfh cell differentiation, germinal center B-cell differentiation in the absence of immunization and autoimmunity. In resting or LPS-stimulated macrophages, controls inflammation by suppressing TNF expression. Also recognizes CDE in its own mRNA and in that of paralogous RC3H2, possibly leading to feedback loop regulation. Inhibits cooperatively with ZC3H12A the differentiation of helper T cells Th17 in lungs. They repress target mRNA encoding the Th17 cell-promoting factors IL6, ICOS, REL, IRF4, NFKBID and NFKBIZ. The cooperation requires RNA-binding by RC3H1 and the nuclease activity of ZC3H12A. Recognizes and binds mRNAs containing a hexaloop stem-loop motif, called alternative decay element (ADE). Together with ZC3H12A, destabilizes TNFRSF4/OX40 mRNA by binding to the conserved stem loop structure in its 3'UTR. Able to interact with double-stranded RNA. miRNA-binding protein that regulates microRNA homeostasis. Enhances DICER-mediated processing of pre-MIR146a but reduces mature MIR146a levels through an increase of 3' end uridylation. Both inhibits ICOS mRNA expression and they may act together to exert the suppression. Acts as a ubiquitin E3 ligase. Pairs with E2 enzymes UBE2A, UBE2B, UBE2D2, UBE2F, UBE2G1, UBE2G2 and UBE2L3 and produces polyubiquitin chains. Shows the strongest activity when paired with UBE2N:UBE2V1 or UBE2N:UBE2V2 E2 complexes and generate both short and long polyubiquitin chains. The sequence is that of Roquin-1 from Mus musculus (Mouse).